The primary structure comprises 119 residues: Ribosome-binding factor A (119 aa).

Belongs to the RbfA family. Monomer. Binds 30S ribosomal subunits, but not 50S ribosomal subunits or 70S ribosomes.

It localises to the cytoplasm. Its function is as follows. One of several proteins that assist in the late maturation steps of the functional core of the 30S ribosomal subunit. Associates with free 30S ribosomal subunits (but not with 30S subunits that are part of 70S ribosomes or polysomes). Required for efficient processing of 16S rRNA. May interact with the 5'-terminal helix region of 16S rRNA. This Wolinella succinogenes (strain ATCC 29543 / DSM 1740 / CCUG 13145 / JCM 31913 / LMG 7466 / NCTC 11488 / FDC 602W) (Vibrio succinogenes) protein is Ribosome-binding factor A.